A 257-amino-acid chain; its full sequence is MSDLESSSSSSSDEEELERCREAALPAWGLEQRPRGPEKPGVDATNAKLPANQPSLMHKVDEHEQDGNELQTTPEFRAHVAKKLGALLDSSITISEIVKEPRKSEVQQGALEDDGFRLFFTSIPGGPEKEAAPQPCRKRLPSSSSSDDGDEELRRCREAAVSASDILQESAIHGHVSVEKKKKRKLKKKAKKEDSADVAATATSKAEVGRQEKESAQLNGDQAPPGTKKKKRKKKTKKASEASLSPPTKSAAAVPSN.

Positions 1-11 (MSDLESSSSSS) are enriched in low complexity. Positions 1–72 (MSDLESSSSS…HEQDGNELQT (72 aa)) are disordered. Basic and acidic residues predominate over residues 32-41 (QRPRGPEKPG). Position 55 is a phosphoserine (Ser-55). Residue Thr-73 is modified to Phosphothreonine. Disordered regions lie at residues 120–157 (FTSIPGGPEKEAAPQPCRKRLPSSSSSDDGDEELRRCR) and 170–257 (SAIH…VPSN). 2 stretches are compositionally biased toward basic residues: residues 180–190 (KKKKRKLKKKA) and 227–237 (TKKKKRKKKTK). Positions 228–236 (KKKKRKKKT) match the Nucleolar localization signal (NLS) motif.

The protein belongs to the CUSTOS family.

The protein resides in the nucleus envelope. Plays a role in the regulation of Wnt signaling pathway during early development. The chain is Protein CUSTOS from Bos taurus (Bovine).